We begin with the raw amino-acid sequence, 464 residues long: Maturase K (464 aa).

This sequence belongs to the intron maturase 2 family. MatK subfamily.

Its subcellular location is the plastid. It localises to the chloroplast. In terms of biological role, usually encoded in the trnK tRNA gene intron. Probably assists in splicing its own and other chloroplast group II introns. The sequence is that of Maturase K from Castanea crenata (Japanese chestnut).